Reading from the N-terminus, the 120-residue chain is Large ribosomal subunit protein uL18 (120 aa).

It belongs to the universal ribosomal protein uL18 family. As to quaternary structure, part of the 50S ribosomal subunit; part of the 5S rRNA/L5/L18/L25 subcomplex. Contacts the 5S and 23S rRNAs.

In terms of biological role, this is one of the proteins that bind and probably mediate the attachment of the 5S RNA into the large ribosomal subunit, where it forms part of the central protuberance. The chain is Large ribosomal subunit protein uL18 from Lawsonia intracellularis (strain PHE/MN1-00).